Consider the following 297-residue polypeptide: Tyrosine recombinase XerD (297 aa).

A Core-binding (CB) domain is found at 1 to 86 (MNDLIDDFLH…SLRSFFHYLM (86 aa)). One can recognise a Tyr recombinase domain in the interval 107-291 (SLPKVLNLDD…TKLRLKDVYK (185 aa)). Residues R147, K171, H243, R246, and H269 contribute to the active site. The active-site O-(3'-phospho-DNA)-tyrosine intermediate is the Y278.

This sequence belongs to the 'phage' integrase family. XerD subfamily. Forms a cyclic heterotetrameric complex composed of two molecules of XerC and two molecules of XerD.

The protein resides in the cytoplasm. In terms of biological role, site-specific tyrosine recombinase, which acts by catalyzing the cutting and rejoining of the recombining DNA molecules. The XerC-XerD complex is essential to convert dimers of the bacterial chromosome into monomers to permit their segregation at cell division. It also contributes to the segregational stability of plasmids. The polypeptide is Tyrosine recombinase XerD (Listeria innocua serovar 6a (strain ATCC BAA-680 / CLIP 11262)).